The primary structure comprises 188 residues: NADH-quinone oxidoreductase subunit B 1 (188 aa).

Residues cysteine 32, cysteine 33, cysteine 98, and cysteine 128 each coordinate [4Fe-4S] cluster. The tract at residues 153-188 (VGGVSRPDALASPADALPPRAADSLTAPPVRPPDPS) is disordered. Low complexity predominate over residues 157–177 (SRPDALASPADALPPRAADSL).

Belongs to the complex I 20 kDa subunit family. In terms of assembly, NDH-1 is composed of 14 different subunits. Subunits NuoB, C, D, E, F, and G constitute the peripheral sector of the complex. [4Fe-4S] cluster serves as cofactor.

The protein resides in the cell membrane. It catalyses the reaction a quinone + NADH + 5 H(+)(in) = a quinol + NAD(+) + 4 H(+)(out). NDH-1 shuttles electrons from NADH, via FMN and iron-sulfur (Fe-S) centers, to quinones in the respiratory chain. The immediate electron acceptor for the enzyme in this species is believed to be a menaquinone. Couples the redox reaction to proton translocation (for every two electrons transferred, four hydrogen ions are translocated across the cytoplasmic membrane), and thus conserves the redox energy in a proton gradient. The polypeptide is NADH-quinone oxidoreductase subunit B 1 (nuoB1) (Salinispora tropica (strain ATCC BAA-916 / DSM 44818 / JCM 13857 / NBRC 105044 / CNB-440)).